The chain runs to 426 residues: Probable alpha-galactosidase B (426 aa).

An N-terminal signal peptide occupies residues 1–13; sequence MSRSKTRQGKLPA. Intrachain disulfides connect C24–C56 and C106–C136. D134 functions as the Nucleophile in the catalytic mechanism. N141 and N159 each carry an N-linked (GlcNAc...) asparagine glycan. Position 204–208 (204–208) interacts with substrate; sequence EWGQA. N-linked (GlcNAc...) asparagine glycosylation occurs at N215. The Proton donor role is filled by D226. Residue N265 is glycosylated (N-linked (GlcNAc...) asparagine).

It belongs to the glycosyl hydrolase 27 family.

Its subcellular location is the secreted. The enzyme catalyses Hydrolysis of terminal, non-reducing alpha-D-galactose residues in alpha-D-galactosides, including galactose oligosaccharides, galactomannans and galactolipids.. In terms of biological role, hydrolyzes a variety of simple alpha-D-galactoside as well as more complex molecules such as oligosaccharides and polysaccharides. In Aspergillus fumigatus (strain CBS 144.89 / FGSC A1163 / CEA10) (Neosartorya fumigata), this protein is Probable alpha-galactosidase B (aglB).